Consider the following 501-residue polypeptide: Glycerol kinase (501 aa).

Residue Thr14 coordinates ADP. 3 residues coordinate ATP: Thr14, Thr15, and Ser16. Thr14 contributes to the sn-glycerol 3-phosphate binding site. An ADP-binding site is contributed by Arg18. Sn-glycerol 3-phosphate is bound by residues Arg84, Glu85, Tyr135, and Asp244. Glycerol contacts are provided by Arg84, Glu85, Tyr135, Asp244, and Gln245. ADP is bound by residues Thr266 and Gly309. 4 residues coordinate ATP: Thr266, Gly309, Gln313, and Gly410. Positions 410 and 414 each coordinate ADP.

The protein belongs to the FGGY kinase family.

The enzyme catalyses glycerol + ATP = sn-glycerol 3-phosphate + ADP + H(+). It functions in the pathway polyol metabolism; glycerol degradation via glycerol kinase pathway; sn-glycerol 3-phosphate from glycerol: step 1/1. With respect to regulation, inhibited by fructose 1,6-bisphosphate (FBP). In terms of biological role, key enzyme in the regulation of glycerol uptake and metabolism. Catalyzes the phosphorylation of glycerol to yield sn-glycerol 3-phosphate. In Deinococcus radiodurans (strain ATCC 13939 / DSM 20539 / JCM 16871 / CCUG 27074 / LMG 4051 / NBRC 15346 / NCIMB 9279 / VKM B-1422 / R1), this protein is Glycerol kinase.